Here is a 111-residue protein sequence, read N- to C-terminus: Translation initiation factor 1A 1 (111 aa).

Residues 1-28 (MTLADLKKPTSRASPSTEETVTRVRTPR) form a disordered region. The region spanning 22–96 (TRVRTPRREN…EKADVIWKYT (75 aa)) is the S1-like domain.

The protein belongs to the eIF-1A family.

In terms of biological role, seems to be required for maximal rate of protein biosynthesis. Enhances ribosome dissociation into subunits and stabilizes the binding of the initiator Met-tRNA(I) to 40 S ribosomal subunits. In Methanosarcina mazei (strain ATCC BAA-159 / DSM 3647 / Goe1 / Go1 / JCM 11833 / OCM 88) (Methanosarcina frisia), this protein is Translation initiation factor 1A 1 (eIF1A1).